The sequence spans 155 residues: Histone H2B.4 (155 aa).

Residues M1–A28 are compositionally biased toward basic and acidic residues. A disordered region spans residues M1–V62. A compositionally biased stretch (basic residues) spans P29–K40. A Glycyl lysine isopeptide (Lys-Gly) (interchain with G-Cter in ubiquitin) cross-link involves residue K151.

The protein belongs to the histone H2B family. The nucleosome is a histone octamer containing two molecules each of H2A, H2B, H3 and H4 assembled in one H3-H4 heterotetramer and two H2A-H2B heterodimers. The octamer wraps approximately 147 bp of DNA. Post-translationally, monoubiquitinated to form H2BK143ub1; may give a specific tag for epigenetic transcriptional activation.

It is found in the nucleus. It localises to the chromosome. Its function is as follows. Core component of nucleosome. Nucleosomes wrap and compact DNA into chromatin, limiting DNA accessibility to the cellular machineries which require DNA as a template. Histones thereby play a central role in transcription regulation, DNA repair, DNA replication and chromosomal stability. DNA accessibility is regulated via a complex set of post-translational modifications of histones, also called histone code, and nucleosome remodeling. The sequence is that of Histone H2B.4 from Volvox carteri (Green alga).